Consider the following 336-residue polypeptide: Heme A synthase (336 aa).

5 helical membrane passes run 5-25 (LTRW…VGGI), 92-112 (GRAT…KGII), 117-137 (ILSY…GWYM), 153-173 (LAFH…KLVK), and 191-211 (LIFS…GALV). Histidine 255 serves as a coordination point for heme. 3 helical membrane passes run 257-277 (LGAY…LKVK), 284-304 (VAFY…ITLL), and 307-327 (VPII…SVVI). A heme-binding site is contributed by histidine 315.

Belongs to the COX15/CtaA family. Type 2 subfamily. Interacts with CtaB. Heme b serves as cofactor.

Its subcellular location is the cell membrane. It carries out the reaction Fe(II)-heme o + 2 A + H2O = Fe(II)-heme a + 2 AH2. Its pathway is porphyrin-containing compound metabolism; heme A biosynthesis; heme A from heme O: step 1/1. Its function is as follows. Catalyzes the conversion of heme O to heme A by two successive hydroxylations of the methyl group at C8. The first hydroxylation forms heme I, the second hydroxylation results in an unstable dihydroxymethyl group, which spontaneously dehydrates, resulting in the formyl group of heme A. The chain is Heme A synthase from Rickettsia bellii (strain OSU 85-389).